A 255-amino-acid polypeptide reads, in one-letter code: EEF1A lysine methyltransferase 4 (255 aa).

S-adenosyl-L-methionine-binding residues include W26 and Y30. At Y39 the chain carries Phosphotyrosine. Residues W41, G66, 88–89 (DY), 113–114 (DV), and K130 each bind S-adenosyl-L-methionine. The Required for methyltransferase activity motif lies at 129–134 (EKGTLD).

This sequence belongs to the methyltransferase superfamily.

It catalyses the reaction L-lysyl-[protein] + S-adenosyl-L-methionine = N(6)-methyl-L-lysyl-[protein] + S-adenosyl-L-homocysteine + H(+). It carries out the reaction N(6)-methyl-L-lysyl-[protein] + S-adenosyl-L-methionine = N(6),N(6)-dimethyl-L-lysyl-[protein] + S-adenosyl-L-homocysteine + H(+). The enzyme catalyses N(6),N(6)-dimethyl-L-lysyl-[protein] + S-adenosyl-L-methionine = N(6),N(6),N(6)-trimethyl-L-lysyl-[protein] + S-adenosyl-L-homocysteine + H(+). Functionally, protein-lysine methyltransferase that efficiently catalyzes three successive methylations on 'Lys-36' in eukaryotic translation elongation factor 1 alpha (EEF1A1 or EEF1A2). This Bos taurus (Bovine) protein is EEF1A lysine methyltransferase 4.